The sequence spans 262 residues: Enoyl-[acyl-carrier-protein] reductase [NADH] FabI (262 aa).

NAD(+) is bound by residues G13, 19–20 (SI), Q40, 64–65 (DV), and I92. Residue A95 participates in substrate binding. Catalysis depends on proton acceptor residues Y146 and Y156. NAD(+) is bound by residues K163 and 192–196 (IRTLA).

This sequence belongs to the short-chain dehydrogenases/reductases (SDR) family. FabI subfamily. Homotetramer.

It carries out the reaction a 2,3-saturated acyl-[ACP] + NAD(+) = a (2E)-enoyl-[ACP] + NADH + H(+). The protein operates within lipid metabolism; fatty acid biosynthesis. It functions in the pathway cofactor biosynthesis; biotin biosynthesis. Catalyzes the reduction of a carbon-carbon double bond in an enoyl moiety that is covalently linked to an acyl carrier protein (ACP). Involved in the elongation cycle of fatty acid which are used in the lipid metabolism and in the biotin biosynthesis. This Salmonella typhimurium (strain LT2 / SGSC1412 / ATCC 700720) protein is Enoyl-[acyl-carrier-protein] reductase [NADH] FabI (fabI).